Consider the following 653-residue polypeptide: Glyceraldehyde-3-phosphate:ferredoxin oxidoreductase (653 aa).

Residues R70, G89, R196, A197, G199, and R206 each coordinate tungstopterin. [4Fe-4S] cluster-binding residues include C333 and C337. Positions 378, 383, and 544 each coordinate tungstopterin. A [4Fe-4S] cluster-binding site is contributed by C549.

It belongs to the AOR/FOR family. As to quaternary structure, monomer. [4Fe-4S] cluster serves as cofactor. The cofactor is tungstopterin.

The enzyme catalyses D-glyceraldehyde 3-phosphate + 2 oxidized [2Fe-2S]-[ferredoxin] + H2O = (2R)-3-phosphoglycerate + 2 reduced [2Fe-2S]-[ferredoxin] + 3 H(+). With respect to regulation, sensitive to oxygen. Activity increased by 58%-93% in the presence of acetyl phosphate, 3-phosphoglycerate or 2,3-bisphosphoglycerate at 10 mM concentration. Inhibited by up to 25% in the presence of crotonaldehyde or formaldehyde at 10 mM concentration. Inhibited by up to 50% by sodium dithionate. 3.5-fold increase in activity observed by addition of potassium phosphate or sodium arsenate at 200 mM concentration. Activity enhanced by potassium chloride, sodium citrate or sodium sulfate at 200 mM concentration. In terms of biological role, catalyzes the oxidation of glyceraldehyde-3-phosphate to 3-phosphoglycerate. Uses ferredoxin as electron acceptor. In vitro can also use benzyl viologen, but not NADP or NAD, as electron acceptor. Probably acts as a glycolytic enzyme in place of glyceraldehyde-3-phosphate dehydrogenase (GAPDH) and phosphoglycerate kinase (PGK) in an unusual Emden-Meyerhof glycolysis. This Pyrococcus furiosus (strain ATCC 43587 / DSM 3638 / JCM 8422 / Vc1) protein is Glyceraldehyde-3-phosphate:ferredoxin oxidoreductase.